The chain runs to 538 residues: Importin subunit alpha-4 (538 aa).

The IBB domain maps to 1-58; it reads MSLRPSTRAELRKKIYKTGVDADEARRRREDNLVEIRKNKREDSLLKKRREGMMLQQQ. ARM repeat units follow at residues 112–152, 155–194, 197–237, 239–278, 281–320, 323–363, 366–405, and 409–448; these read SPPI…NVAS, SDHT…NVAG, PNCR…NFCR, KPPT…YLSD, NDKI…NIVT, DSQT…NITA, KLQI…NATS, and HEQI…NILK.

It belongs to the importin alpha family. In terms of assembly, forms a complex with importin subunit beta-1. Interacts with A.tumefaciens VirD2 and VirE2.

It localises to the nucleus envelope. In terms of biological role, binds to conventional NLS motifs and mediates nuclear protein import across the nuclear envelope. Acts as a cellular receptor for the nuclear import of the virD2 protein of Agrobacterium and is essential for Agrobacterium-mediated root transformation. The sequence is that of Importin subunit alpha-4 from Arabidopsis thaliana (Mouse-ear cress).